We begin with the raw amino-acid sequence, 387 residues long: Carboxyaminopropylagmatine decarboxylase (387 aa).

Lysine 52 carries the N6-(pyridoxal phosphate)lysine modification.

The protein belongs to the Orn/Lys/Arg decarboxylase class-II family. Pyridoxal 5'-phosphate is required as a cofactor.

It carries out the reaction N(1)-[(S)-3-amino-3-carboxypropyl]agmatine + H(+) = N(1)-(3-aminopropyl)agmatine + CO2. The protein operates within amine and polyamine biosynthesis; spermidine biosynthesis. Decarboxylase involved in the biosynthesis of spermidine via the carboxyaminopropylagmatine (CAPA) pathway. Catalyzes the decarboxylation of CAPA to form aminopropylagmatine (APA). Can also decarboxylate carboxyspermidine and carboxynorspermidine, but not ornithine, arginine, lysine and meso-diaminopimelate. This chain is Carboxyaminopropylagmatine decarboxylase, found in Synechocystis sp. (strain ATCC 27184 / PCC 6803 / Kazusa).